We begin with the raw amino-acid sequence, 1588 residues long: RB1-inducible coiled-coil protein 1 (1588 aa).

A phosphoserine mark is found at serine 222, serine 229, and serine 237. Residue threonine 238 is modified to Phosphothreonine. Residues serine 243, serine 253, serine 257, and serine 261 each carry the phosphoserine modification. Residues 565–568 carry the Nuclear localization signal motif; it reads KPRK. Phosphoserine occurs at positions 623, 646, 649, 652, 733, 1087, 1366, and 1478. The segment at 638–674 is disordered; the sequence is QKVSTSQASPQSAASPRIESTTGITTTTSPKTPPPLT. Positions 643 to 667 are enriched in low complexity; sequence SQASPQSAASPRIESTTGITTTTSP. The FFAT motif lies at 730-736; that stretch reads DFMSAVN. Coiled coils occupy residues 858 to 1393 and 1440 to 1479; these read LKEK…TSSF and SVQENMLSEEKQRIMLLERTLQLKEEENKRLNQRLMSQSL.

As to quaternary structure, part of a complex containing ATG13/KIAA0652, ULK1 and RB1CC1. This complex associates with ATG101. Interacts with PTK2/FAK1 and PTK2B/PYK2. Interacts with GABARAP and GABARAPL1. Interacts with ATG16L1; the interaction is required for ULK1 complex-dependent autophagy. Interacts with RNF111, SKI and SMAD7. Interacts with COP1 in the cytoplasm of proliferating cells in response to UV stimulation. Interacts with TP53. Interacts with C9orf72. Interacts with WDR45B. Interacts with ATG13; this interaction is increased in the absence of TMEM39A. Interacts with WIPI2. Interacts with TAX1BP1. Interacts (via phosphorylated FFAT motif) with MOSPD2. Phosphorylation at Ser-733 of the FFAT motif activates interaction with MOSPD2. In terms of tissue distribution, expressed abundantly in heart and testis, and moderately in kidney, liver and skeletal muscles. Very low expression levels in lung and spleen. Colocalizes with RB1 in various tissues.

It is found in the nucleus. The protein resides in the cytoplasm. It localises to the cytosol. The protein localises to the preautophagosomal structure. Its subcellular location is the lysosome. In terms of biological role, involved in autophagy. Regulates early events but also late events of autophagosome formation through direct interaction with Atg16L1. Required for the formation of the autophagosome-like double-membrane structure that surrounds the Salmonella-containing vacuole (SCV) during S.typhimurium infection and subsequent xenophagy. Involved in repair of DNA damage caused by ionizing radiation, which subsequently improves cell survival by decreasing apoptosis. Inhibits PTK2/FAK1 and PTK2B/PYK2 kinase activity, affecting their downstream signaling pathways. Plays a role as a modulator of TGF-beta-signaling by restricting substrate specificity of RNF111. Functions as a DNA-binding transcription factor. Is a potent regulator of the RB1 pathway through induction of RB1 expression. Plays a crucial role in muscular differentiation. Plays an indispensable role in fetal hematopoiesis and in the regulation of neuronal homeostasis. The polypeptide is RB1-inducible coiled-coil protein 1 (Mus musculus (Mouse)).